Here is a 274-residue protein sequence, read N- to C-terminus: Sulfur carrier protein FdhD (274 aa).

Cys-121 (cysteine persulfide intermediate) is an active-site residue. A Mo-bis(molybdopterin guanine dinucleotide)-binding site is contributed by 258–263 (FSKPGR).

The protein belongs to the FdhD family.

The protein localises to the cytoplasm. Required for formate dehydrogenase (FDH) activity. Acts as a sulfur carrier protein that transfers sulfur from IscS to the molybdenum cofactor prior to its insertion into FDH. This Yersinia pseudotuberculosis serotype O:1b (strain IP 31758) protein is Sulfur carrier protein FdhD.